Here is a 385-residue protein sequence, read N- to C-terminus: Cytochrome b (385 aa).

A run of 4 helical transmembrane segments spans residues 32–52 (FGSLLGLCLGIQIVTGVTLAM), 76–98 (WLVRYLHSNTASAFFFLVYLHIG), 113–133 (TWAIGTVILIVMMATAFLGYV), and 179–199 (FFALHFLLPFVLAALVIMHLI). 2 residues coordinate heme b: H82 and H96. H183 and H197 together coordinate heme b. H202 contacts a ubiquinone. 4 helical membrane-spanning segments follow: residues 226 to 246 (FVFKDLVTIFIFFIVLSIFVF), 290 to 310 (LLGVIAMFAAILALMVMPITD), 322 to 342 (LSKVAFYVFVANFLILMQIGA), and 349 to 369 (FIEFGQISTVLYFAHFFVIVP).

It belongs to the cytochrome b family. As to quaternary structure, fungal cytochrome b-c1 complex contains 10 subunits; 3 respiratory subunits, 2 core proteins and 5 low-molecular weight proteins. Cytochrome b-c1 complex is a homodimer. It depends on heme b as a cofactor.

The protein resides in the mitochondrion inner membrane. Functionally, component of the ubiquinol-cytochrome c reductase complex (complex III or cytochrome b-c1 complex) that is part of the mitochondrial respiratory chain. The b-c1 complex mediates electron transfer from ubiquinol to cytochrome c. Contributes to the generation of a proton gradient across the mitochondrial membrane that is then used for ATP synthesis. In Aspergillus terreus (strain NIH 2624 / FGSC A1156), this protein is Cytochrome b (cob).